Here is a 435-residue protein sequence, read N- to C-terminus: tRNA-2-methylthio-N(6)-dimethylallyladenosine synthase (435 aa).

Positions 5–120 constitute an MTTase N-terminal domain; that stretch reads KKLFIETLGC…ISEVLHKERA (116 aa). [4Fe-4S] cluster-binding residues include Cys14, Cys51, Cys83, Cys152, Cys156, and Cys159. The 235-residue stretch at 138–372 folds into the Radical SAM core domain; that stretch reads RTSPYKAYIN…NLAVNILDEK (235 aa). One can recognise a TRAM domain in the interval 374–435; sequence KTHLGKIYRV…RTILSGEIVG (62 aa).

It belongs to the methylthiotransferase family. MiaB subfamily. In terms of assembly, monomer. Requires [4Fe-4S] cluster as cofactor.

It is found in the cytoplasm. The enzyme catalyses N(6)-dimethylallyladenosine(37) in tRNA + (sulfur carrier)-SH + AH2 + 2 S-adenosyl-L-methionine = 2-methylsulfanyl-N(6)-dimethylallyladenosine(37) in tRNA + (sulfur carrier)-H + 5'-deoxyadenosine + L-methionine + A + S-adenosyl-L-homocysteine + 2 H(+). Its function is as follows. Catalyzes the methylthiolation of N6-(dimethylallyl)adenosine (i(6)A), leading to the formation of 2-methylthio-N6-(dimethylallyl)adenosine (ms(2)i(6)A) at position 37 in tRNAs that read codons beginning with uridine. In Sulfurimonas denitrificans (strain ATCC 33889 / DSM 1251) (Thiomicrospira denitrificans (strain ATCC 33889 / DSM 1251)), this protein is tRNA-2-methylthio-N(6)-dimethylallyladenosine synthase.